The chain runs to 36 residues: Photosystem I reaction center subunit VIII (36 aa).

The chain crosses the membrane as a helical span at residues Ser-8–Leu-28.

The protein belongs to the PsaI family.

It is found in the plastid. The protein localises to the chloroplast thylakoid membrane. Its function is as follows. May help in the organization of the PsaL subunit. The protein is Photosystem I reaction center subunit VIII of Daucus carota (Wild carrot).